Consider the following 637-residue polypeptide: tRNA-dihydrouridine(47) synthase [NAD(P)(+)]-like (637 aa).

3 disordered regions span residues 1-21 (MAET…ACER), 41-63 (LDGD…EPGA), and 85-105 (ERQV…VKPA). The segment covering 89 to 104 (PKRARGQNKSRPHVKP) has biased composition (basic residues). 2 C3H1-type zinc fingers span residues 107–137 (YDKD…HDVG) and 145–175 (ADLG…HLGP). A Phosphothreonine modification is found at Thr260. A phosphoserine mark is found at Ser263 and Ser264. FMN is bound by residues 298–300 (PLT) and Gln352. The Proton donor role is filled by Cys383. Residue Lys403 forms a Glycyl lysine isopeptide (Lys-Gly) (interchain with G-Cter in SUMO2) linkage. Residues Lys422, His452, 484–486 (NGD), and 507–508 (AR) each bind FMN.

It belongs to the Dus family. Dus3 subfamily. FMN is required as a cofactor.

It carries out the reaction 5,6-dihydrouridine(47) in tRNA + NAD(+) = uridine(47) in tRNA + NADH + H(+). It catalyses the reaction 5,6-dihydrouridine(47) in tRNA + NADP(+) = uridine(47) in tRNA + NADPH + H(+). The catalysed reaction is a 5,6-dihydrouridine in mRNA + NAD(+) = a uridine in mRNA + NADH + H(+). The enzyme catalyses a 5,6-dihydrouridine in mRNA + NADP(+) = a uridine in mRNA + NADPH + H(+). Catalyzes the synthesis of dihydrouridine, a modified base, in various RNAs, such as tRNAs, mRNAs and some long non-coding RNAs (lncRNAs). Mainly modifies the uridine in position 47 (U47) in the D-loop of most cytoplasmic tRNAs. Also able to mediate the formation of dihydrouridine in some mRNAs, thereby regulating their translation. This is tRNA-dihydrouridine(47) synthase [NAD(P)(+)]-like from Mus musculus (Mouse).